A 501-amino-acid polypeptide reads, in one-letter code: Ribose import ATP-binding protein RbsA (501 aa).

ABC transporter domains follow at residues leucine 5–lysine 241 and alanine 252–leucine 495. Position 37 to 44 (glycine 37 to serine 44) interacts with ATP.

Belongs to the ABC transporter superfamily. Ribose importer (TC 3.A.1.2.1) family. In terms of assembly, the complex is composed of an ATP-binding protein (RbsA), two transmembrane proteins (RbsC) and a solute-binding protein (RbsB).

The protein localises to the cell inner membrane. It carries out the reaction D-ribose(out) + ATP + H2O = D-ribose(in) + ADP + phosphate + H(+). In terms of biological role, part of the ABC transporter complex RbsABC involved in ribose import. Responsible for energy coupling to the transport system. The chain is Ribose import ATP-binding protein RbsA from Escherichia coli O6:H1 (strain CFT073 / ATCC 700928 / UPEC).